The chain runs to 73 residues: Omega-conotoxin CVID (73 aa).

Positions 1-22 (MKLTCVVIVAVLLLTACQLITA) are cleaved as a signal peptide. The propeptide occupies 23-45 (DDSRGTQKHRALRSDTKLSMSTR). 3 cysteine pairs are disulfide-bonded: Cys46–Cys61, Cys53–Cys65, and Cys60–Cys72. Cysteine amide is present on Cys72.

Belongs to the conotoxin O1 superfamily. Expressed by the venom duct.

It is found in the secreted. Its function is as follows. Omega-conotoxins act at presynaptic membranes, they bind and block voltage-gated calcium channels. This toxin inhibits neurotransmitter release, it blocks N-type calcium channels, probably a N-type (Cav2.2/CACNA1B) calcium channel variant. This is Omega-conotoxin CVID from Conus catus (Cat cone).